Consider the following 552-residue polypeptide: Amino-acid acetyltransferase, mitochondrial (552 aa).

Residues 1–32 (MIKTWIRCLTTEVRYHQPNAHGRSLVMSVLNS) constitute a mitochondrion transit peptide. One can recognise an N-acetyltransferase domain in the interval 379–545 (QTGKSDPVSK…LRDYAKYVRD (167 aa)).

The protein belongs to the acetyltransferase family.

It localises to the mitochondrion. The enzyme catalyses L-glutamate + acetyl-CoA = N-acetyl-L-glutamate + CoA + H(+). It functions in the pathway amino-acid biosynthesis; L-arginine biosynthesis; N(2)-acetyl-L-ornithine from L-glutamate: step 1/4. Its function is as follows. N-acetylglutamate synthase involved in arginine biosynthesis. The chain is Amino-acid acetyltransferase, mitochondrial (ARG2) from Kluyveromyces lactis (strain ATCC 8585 / CBS 2359 / DSM 70799 / NBRC 1267 / NRRL Y-1140 / WM37) (Yeast).